The following is a 505-amino-acid chain: Maturase K (505 aa).

It belongs to the intron maturase 2 family. MatK subfamily.

It is found in the plastid. The protein resides in the chloroplast. Its function is as follows. Usually encoded in the trnK tRNA gene intron. Probably assists in splicing its own and other chloroplast group II introns. The chain is Maturase K from Nuphar variegata (Yellow pond lily).